Here is a 150-residue protein sequence, read N- to C-terminus: U1 small nuclear ribonucleoprotein C (150 aa).

Residues 4–36 (YYCDYCKSYLTHDTMSVRKSHLQGRNHIKFYCD) form a Matrin-type zinc finger. A disordered region spans residues 66–132 (SDAKKSNGSS…GLPLPPPAVY (67 aa)). The span at 80–92 (DIDKKENSSDHNK) shows a compositional bias: basic and acidic residues. Residues 103–112 (NDNDDDDDEM) are compositionally biased toward acidic residues. Pro residues predominate over residues 115–130 (LPPPPNLSGLPLPPPA).

It belongs to the U1 small nuclear ribonucleoprotein C family. In terms of assembly, U1 snRNP is composed of the 7 core Sm proteins B/B', D1, D2, D3, E, F and G that assemble in a heptameric protein ring on the Sm site of the small nuclear RNA to form the core snRNP, and at least 3 U1 snRNP-specific proteins U1-70K, U1-A and U1-C. U1-C interacts with U1 snRNA and the 5' splice-site region of the pre-mRNA.

It localises to the nucleus. Its function is as follows. Component of the spliceosomal U1 snRNP, which is essential for recognition of the pre-mRNA 5' splice-site and the subsequent assembly of the spliceosome. U1-C is directly involved in initial 5' splice-site recognition for both constitutive and regulated alternative splicing. The interaction with the 5' splice-site seems to precede base-pairing between the pre-mRNA and the U1 snRNA. Stimulates commitment or early (E) complex formation by stabilizing the base pairing of the 5' end of the U1 snRNA and the 5' splice-site region. This is U1 small nuclear ribonucleoprotein C from Candida albicans (strain SC5314 / ATCC MYA-2876) (Yeast).